Consider the following 407-residue polypeptide: Substance-P receptor (407 aa).

Over Met-1–Gln-31 the chain is Extracellular. N-linked (GlcNAc...) asparagine glycosylation is found at Asn-14 and Asn-18. The helical transmembrane segment at Ile-32–Ile-54 threads the bilayer. Residues Trp-55–Arg-64 lie on the Cytoplasmic side of the membrane. The chain crosses the membrane as a helical span at residues Thr-65–Thr-86. The Extracellular segment spans residues Val-87–Lys-106. A disulfide bond links Cys-105 and Cys-180. Residues Phe-107 to Phe-128 form a helical membrane-spanning segment. Residues Asp-129–Lys-148 are Cytoplasmic-facing. A helical membrane pass occupies residues Val-149–Ser-169. The Extracellular segment spans residues Thr-170 to Lys-194. A helical transmembrane segment spans residues Ala-195 to Val-219. The Cytoplasmic portion of the chain corresponds to Gly-220–Lys-248. The helical transmembrane segment at Met-249–Leu-270 threads the bilayer. Residues Pro-271–Ile-283 are Extracellular-facing. The chain crosses the membrane as a helical span at residues Gln-284–Leu-308. Over Asn-309–Ala-407 the chain is Cytoplasmic. Cys-322 carries the S-palmitoyl cysteine lipid modification. The tract at residues Val-362–Ala-407 is disordered. The segment covering Thr-376–Ala-407 has biased composition (polar residues).

Belongs to the G-protein coupled receptor 1 family. As to quaternary structure, interacts with ARRB1.

The protein localises to the cell membrane. Its function is as follows. This is a receptor for the tachykinin neuropeptide substance P. It is probably associated with G proteins that activate a phosphatidylinositol-calcium second messenger system. The rank order of affinity of this receptor to tachykinins is: substance P &gt; substance K &gt; neuromedin-K. This Rattus norvegicus (Rat) protein is Substance-P receptor (Tacr1).